The following is a 248-amino-acid chain: Probable 2-oxo-3-(5-oxofuran-2-ylidene)propanoate lactonase (248 aa).

Residues cysteine 123, aspartate 180, and histidine 212 contribute to the active site.

The protein belongs to the dienelactone hydrolase family.

The enzyme catalyses 2-oxo-3-(5-oxofuran-2-ylidene)propanoate + H2O = 3-maleylpyruvate + H(+). In terms of biological role, involved in the 5-nitroanthranilic acid (5NAA) degradation. Catalyzes the hydrolysis of the lactone to produce maleylpyruvate biodegradation of 5-nitroanthranilate. This is Probable 2-oxo-3-(5-oxofuran-2-ylidene)propanoate lactonase (naaC) from Bradyrhizobium sp.